The chain runs to 122 residues: Small ribosomal subunit protein uS13 (122 aa).

A disordered region spans residues Gly-95–Lys-122.

It belongs to the universal ribosomal protein uS13 family. Part of the 30S ribosomal subunit. Forms a loose heterodimer with protein S19. Forms two bridges to the 50S subunit in the 70S ribosome.

Located at the top of the head of the 30S subunit, it contacts several helices of the 16S rRNA. In the 70S ribosome it contacts the 23S rRNA (bridge B1a) and protein L5 of the 50S subunit (bridge B1b), connecting the 2 subunits; these bridges are implicated in subunit movement. Contacts the tRNAs in the A and P-sites. In Agathobacter rectalis (strain ATCC 33656 / DSM 3377 / JCM 17463 / KCTC 5835 / VPI 0990) (Eubacterium rectale), this protein is Small ribosomal subunit protein uS13.